A 265-amino-acid chain; its full sequence is 4-hydroxy-tetrahydrodipicolinate reductase (265 aa).

NAD(+) is bound by residues 7–12 (GASGRM) and D33. An NADP(+)-binding site is contributed by R34. NAD(+) is bound by residues 96-98 (GTT) and 120-123 (AANM). The Proton donor/acceptor role is filled by H153. Residue H154 coordinates (S)-2,3,4,5-tetrahydrodipicolinate. The Proton donor role is filled by K157. 163–164 (GT) lines the (S)-2,3,4,5-tetrahydrodipicolinate pocket.

It belongs to the DapB family.

The protein localises to the cytoplasm. It carries out the reaction (S)-2,3,4,5-tetrahydrodipicolinate + NAD(+) + H2O = (2S,4S)-4-hydroxy-2,3,4,5-tetrahydrodipicolinate + NADH + H(+). The enzyme catalyses (S)-2,3,4,5-tetrahydrodipicolinate + NADP(+) + H2O = (2S,4S)-4-hydroxy-2,3,4,5-tetrahydrodipicolinate + NADPH + H(+). Its pathway is amino-acid biosynthesis; L-lysine biosynthesis via DAP pathway; (S)-tetrahydrodipicolinate from L-aspartate: step 4/4. Functionally, catalyzes the conversion of 4-hydroxy-tetrahydrodipicolinate (HTPA) to tetrahydrodipicolinate. The sequence is that of 4-hydroxy-tetrahydrodipicolinate reductase from Burkholderia lata (strain ATCC 17760 / DSM 23089 / LMG 22485 / NCIMB 9086 / R18194 / 383).